A 210-amino-acid polypeptide reads, in one-letter code: Thymidylate kinase (210 aa).

9–16 (GLEGAGKS) provides a ligand contact to ATP.

Belongs to the thymidylate kinase family.

The catalysed reaction is dTMP + ATP = dTDP + ADP. Functionally, phosphorylation of dTMP to form dTDP in both de novo and salvage pathways of dTTP synthesis. The chain is Thymidylate kinase from Aliivibrio fischeri (strain ATCC 700601 / ES114) (Vibrio fischeri).